Consider the following 488-residue polypeptide: GlcNAc-binding protein A (488 aa).

A signal peptide spans 1 to 24; sequence MIMIITKKTLLPVTLALFSSGVMA. Residues 25–202 form the Chitin-binding type-4 domain; it reads HGYVSSVEGG…SFYNVIDVMF (178 aa). The region spanning 439-480 is the Chitin-binding type-3 domain; the sequence is AGSKVLATDGRIYECKPFPYSGYCIQWSPSATQFEPGVGSDW.

Belongs to the GbpA family.

The protein localises to the secreted. Functionally, probably interacts with GlcNAc residues. May promote attachment to both epithelial cell surfaces and chitin. This is GlcNAc-binding protein A from Photobacterium profundum (strain SS9).